Consider the following 88-residue polypeptide: Small ribosomal subunit protein uS15c (88 aa).

This sequence belongs to the universal ribosomal protein uS15 family. Part of the 30S ribosomal subunit.

It localises to the plastid. It is found in the chloroplast. This Crucihimalaya wallichii (Rock-cress) protein is Small ribosomal subunit protein uS15c (rps15).